A 620-amino-acid polypeptide reads, in one-letter code: Translocator protein BipB (620 aa).

The interval Gln-58 to Arg-95 is disordered. Basic and acidic residues predominate over residues His-66 to Ala-84. Positions Glu-309–Met-339 form a coiled coil. Helical transmembrane passes span Phe-355–Leu-375, Ala-401–Cys-421, and Leu-430–Val-450.

Belongs to the SctE/SipB/YopB family.

The protein localises to the secreted. It is found in the host membrane. Plays a role in the bacterium-induced formation of multinucleated giant cell (MNGC), which is formed after host cell fusion, as well as in the intercellular spreading of bacteria and in the induction of apoptosis in macrophages. May act in concert with other effector proteins to induce fusion of host cell membranes. This Burkholderia pseudomallei (strain 1106a) protein is Translocator protein BipB (bipB).